The sequence spans 214 residues: Thymidylate kinase (214 aa).

An ATP-binding site is contributed by 7–14 (GIEGAGKT).

Belongs to the thymidylate kinase family.

It carries out the reaction dTMP + ATP = dTDP + ADP. Phosphorylation of dTMP to form dTDP in both de novo and salvage pathways of dTTP synthesis. The chain is Thymidylate kinase from Desulfosudis oleivorans (strain DSM 6200 / JCM 39069 / Hxd3) (Desulfococcus oleovorans).